The following is a 228-amino-acid chain: Protein JAZ7 (228 aa).

The region spanning 101 to 136 is the Tify domain; that stretch reads LSPNESTLTIFYMGEVHIFPGISPEKAELIIDLVSK. The Jas motif lies at 176-199; it reads MARRATLARFLEKRKHRLIKARPY. Residues 177–184 carry the Nuclear localization signal motif; that stretch reads ARRATLAR.

Belongs to the TIFY/JAZ family. Interacts with MYC2 (via N-terminus). JAZ7 competes with MED25 for binding to MYC2. Interacts with MTB1 (via N-terminus).

The protein localises to the nucleus. Repressor of jasmonate responses. The sequence is that of Protein JAZ7 from Solanum lycopersicum (Tomato).